Consider the following 669-residue polypeptide: PAN2-PAN3 deadenylation complex subunit PAN3 (669 aa).

The segment covering 1–10 (MATTFGSPSG) has biased composition (polar residues). The disordered stretch occupies residues 1–25 (MATTFGSPSGDSRRGVASPRPKGRE). Residues 25-54 (EAKNTFCRNVTIYGHCRYENSKCRPPHLPD) form a C3H1-type zinc finger. Residues 247 to 519 (QVMPNSTLPV…DIDNFLGGIS (273 aa)) form a pseudokinase domain region. Residues Arg-298, 347-354 (DYHPNSKS), and 408-409 (SK) contribute to the ATP site. Positions 520 to 558 (DQLASVFDSELHAQDTLTNTLGRELESSRIVRLLVKLNM) form a coiled coil. A knob domain region spans residues 559–669 (VNERPELDAS…LIRAGRGQGK (111 aa)).

This sequence belongs to the protein kinase superfamily. PAN3 family. Homodimer. Forms a heterotrimer with a catalytic subunit PAN2 to form the poly(A)-nuclease (PAN) deadenylation complex. Interacts (via PAM-2 motif) with poly(A)-binding protein PAB1 (via PABC domain), conferring substrate specificity of the enzyme complex.

Its subcellular location is the cytoplasm. Its function is as follows. Regulatory subunit of the poly(A)-nuclease (PAN) deadenylation complex, one of two cytoplasmic mRNA deadenylases involved in mRNA turnover. PAN specifically shortens poly(A) tails of RNA and the activity is stimulated by poly(A)-binding protein PAB1. PAN deadenylation is followed by rapid degradation of the shortened mRNA tails by the CCR4-NOT complex. Deadenylated mRNAs are then degraded by two alternative mechanisms, namely exosome-mediated 3'-5' exonucleolytic degradation, or deadenylation-dependent mRNA decaping and subsequent 5'-3' exonucleolytic degradation by XRN1. May also be involved in post-transcriptional maturation of mRNA poly(A) tails. PAN3 acts as a positive regulator for PAN activity, recruiting the catalytic subunit PAN2 to mRNA via its interaction with RNA and with PAB1. In Phaeosphaeria nodorum (strain SN15 / ATCC MYA-4574 / FGSC 10173) (Glume blotch fungus), this protein is PAN2-PAN3 deadenylation complex subunit PAN3.